The following is a 365-amino-acid chain: Popy Class I histocompatibility antigen, A-1 alpha chain (365 aa).

A signal peptide spans 1–24 (MAIMAPRTLLLLLSGALALTQTWA). Residues 25 to 114 (GSHSMRYFST…LRGYYNQSDG (90 aa)) are alpha-1. The Extracellular segment spans residues 25–308 (GSHSMRYFST…ELSSQPTIPI (284 aa)). The N-linked (GlcNAc...) asparagine glycan is linked to Asn-110. The tract at residues 115 to 206 (GSHTIQRMFG…ENGKETLQRT (92 aa)) is alpha-2. Disulfide bonds link Cys-125-Cys-188 and Cys-227-Cys-283. The segment at 207-298 (DAPKTHMTHH…GLPEPLTLRW (92 aa)) is alpha-3. The Ig-like C1-type domain maps to 209 to 297 (PKTHMTHHPV…EGLPEPLTLR (89 aa)). The tract at residues 299 to 308 (ELSSQPTIPI) is connecting peptide. The helical transmembrane segment at 309 to 332 (VGIIAGLVLLGAVITGAVVAAVMW) threads the bilayer. Residues 333–365 (RRRNSDRKGGSYSQAASNDSAQGSDVSLTACKV) are Cytoplasmic-facing. The interval 340–365 (KGGSYSQAASNDSAQGSDVSLTACKV) is disordered. At Ser-343 the chain carries Phosphoserine. Residues 343–359 (SYSQAASNDSAQGSDVS) are compositionally biased toward polar residues. Tyr-344 carries the phosphotyrosine modification. Phosphoserine occurs at positions 345, 349, 352, 356, and 359.

The protein belongs to the MHC class I family. In terms of assembly, heterodimer of an alpha chain and a beta chain (beta-2-microglobulin).

It localises to the membrane. Functionally, involved in the presentation of foreign antigens to the immune system. The protein is Popy Class I histocompatibility antigen, A-1 alpha chain of Pongo pygmaeus (Bornean orangutan).